Consider the following 1524-residue polypeptide: DNA polymerase alpha catalytic subunit (1524 aa).

Disordered stretches follow at residues 1-53 and 68-139; these read MSGD…QKPI and RRRE…KVNP. Positions 20–30 are enriched in basic and acidic residues; sequence SSRKDTLERLK. Acidic residues predominate over residues 79–96; it reads EDGEGGDLGYLDEGEEED. Cys1333, Cys1336, Cys1375, Cys1378, Cys1414, Cys1419, Cys1440, and Cys1446 together coordinate Zn(2+). The CysA-type zinc finger occupies 1333 to 1378; that stretch reads CPSCSTAFNCPSIISSVCASISKKPATPETEESDSTFWLKLHCPKC. The short motif at 1414–1446 is the CysB motif element; it reads CEDESCKHTTRSPNFRLLGERERGTVCPNYPNC.

The protein belongs to the DNA polymerase type-B family.

It is found in the nucleus. It carries out the reaction DNA(n) + a 2'-deoxyribonucleoside 5'-triphosphate = DNA(n+1) + diphosphate. Its function is as follows. Polymerase alpha in a complex with DNA primase is a replicative polymerase. The chain is DNA polymerase alpha catalytic subunit (POLA) from Arabidopsis thaliana (Mouse-ear cress).